The sequence spans 258 residues: SLA class II histocompatibility antigen, DQ haplotype D beta chain (258 aa).

An N-terminal signal peptide occupies residues 1–31 (MVALRLPRGLWTAALTVMLVVLGAPVAEGRD). The segment at 32-123 (SPQDFVVQFK…IEEGTTLQRR (92 aa)) is beta-1. Residues 32–227 (SPQDFVVQFK…RAQSESAQSK (196 aa)) are Extracellular-facing. 2 disulfide bridges follow: Cys44-Cys108 and Cys146-Cys202. Asn48 carries N-linked (GlcNAc...) asparagine glycosylation. The segment at 124-217 (VQPTVTISPS…SLQSPILVEW (94 aa)) is beta-2. The Ig-like C1-type domain maps to 126–230 (PTVTISPSKA…SESAQSKMLS (105 aa)). The tract at residues 218-227 (RAQSESAQSK) is connecting peptide. The helical transmembrane segment at 228-248 (MLSGVGGFVLGLIFLGLGLFI) threads the bilayer. Residues 249-258 (RHRSQKGLVR) are Cytoplasmic-facing.

This sequence belongs to the MHC class II family.

Its subcellular location is the membrane. This chain is SLA class II histocompatibility antigen, DQ haplotype D beta chain, found in Sus scrofa (Pig).